The chain runs to 108 residues: Large ribosomal subunit protein bL21 (108 aa).

Belongs to the bacterial ribosomal protein bL21 family. As to quaternary structure, part of the 50S ribosomal subunit. Contacts protein L20.

Its function is as follows. This protein binds to 23S rRNA in the presence of protein L20. This Acidobacterium capsulatum (strain ATCC 51196 / DSM 11244 / BCRC 80197 / JCM 7670 / NBRC 15755 / NCIMB 13165 / 161) protein is Large ribosomal subunit protein bL21.